Consider the following 504-residue polypeptide: D-alanine--D-alanyl carrier protein ligase (504 aa).

An ATP-binding site is contributed by 152–153 (TS). Position 197 (D197) interacts with D-alanine. 292 to 297 (NTYGPT) contributes to the ATP binding site. V301 contributes to the D-alanine binding site. Residues D383, 394–397 (YNGR), and K492 each bind ATP. Residue K492 coordinates D-alanine.

It belongs to the ATP-dependent AMP-binding enzyme family. DltA subfamily.

Its subcellular location is the cytoplasm. It carries out the reaction holo-[D-alanyl-carrier protein] + D-alanine + ATP = D-alanyl-[D-alanyl-carrier protein] + AMP + diphosphate. Its pathway is cell wall biogenesis; lipoteichoic acid biosynthesis. Functionally, catalyzes the first step in the D-alanylation of lipoteichoic acid (LTA), the activation of D-alanine and its transfer onto the D-alanyl carrier protein (Dcp) DltC. In an ATP-dependent two-step reaction, forms a high energy D-alanyl-AMP intermediate, followed by transfer of the D-alanyl residue as a thiol ester to the phosphopantheinyl prosthetic group of the Dcp. D-alanylation of LTA plays an important role in modulating the properties of the cell wall in Gram-positive bacteria, influencing the net charge of the cell wall. In Bacillus thuringiensis (strain Al Hakam), this protein is D-alanine--D-alanyl carrier protein ligase.